Here is a 246-residue protein sequence, read N- to C-terminus: mRNA-decapping protein g5R (246 aa).

The Nudix hydrolase domain maps to 93–239 (QKFRKNWLLP…IIGPAFNFIK (147 aa)). Residues 128 to 149 (GKPKEDESDLTCAIREFEEETG) carry the Nudix box motif. Glu-134 is a Mg(2+) binding site. Catalysis depends on Glu-143, which acts as the Nucleophile. 2 residues coordinate Mg(2+): Glu-147 and Asp-169.

The protein belongs to the Nudix hydrolase family. DIPP subfamily. As to quaternary structure, interacts with host RPL23A. Requires Mg(2+) as cofactor. Mn(2+) serves as cofactor.

The protein localises to the host rough endoplasmic reticulum. It catalyses the reaction diphospho-myo-inositol polyphosphate + H2O = myo-inositol polyphosphate + phosphate.. Its function is as follows. Decapping enzyme required for the removal of the 5'-end m7GpppN cap tethered to viral and host mRNAs to allow their decay in cells. May therefore accelerate viral and cellular mRNA turnover to eliminate competing host mRNAs and allow stage-specific synthesis of viral proteins. Acceleration of the turnover of cellular transcripts may even promote the shutoff of host protein synthesis. In addition to the mRNA cap, g5R also efficiently hydrolyzes diphosphoinositol polyphosphates. Down-regulation of the level of PP-InsP5 (diphosphoinositol pentakisphosphate) may play a role in viral manipulation of the cellular secretory pathway, a step necessary for the formation of virions. Binds viral and cellular poly(A) mRNAs, thereby decreasing both types of mRNAs. This African swine fever virus (isolate Warthog/Namibia/Wart80/1980) (ASFV) protein is mRNA-decapping protein g5R.